The following is a 339-amino-acid chain: UDP-glucose 4-epimerase (339 aa).

NAD(+)-binding positions include 12 to 13 (FI), 32 to 37 (DNLCNS), 59 to 60 (DI), 81 to 85 (FAGLK), Asn100, Ser125, Tyr150, Lys154, and Phe179. 2 residues coordinate substrate: Ser125 and Tyr150. Catalysis depends on Tyr150, which acts as the Proton acceptor. Residues Asn180, 200–201 (NL), 217–219 (AVF), Arg232, and 293–296 (RAGD) contribute to the substrate site.

The protein belongs to the NAD(P)-dependent epimerase/dehydratase family. In terms of assembly, homodimer. NAD(+) serves as cofactor.

The enzyme catalyses UDP-alpha-D-glucose = UDP-alpha-D-galactose. The protein operates within carbohydrate metabolism; galactose metabolism. Functionally, involved in the metabolism of galactose. Plays an essential role in the incorporation of galactose into meningococcal lipopolysaccharide surface molecules, which are important for pathogenesis. Catalyzes the conversion of UDP-galactose (UDP-Gal) to UDP-glucose (UDP-Glc) through a mechanism involving the transient reduction of NAD. The chain is UDP-glucose 4-epimerase (galE) from Neisseria meningitidis serogroup B (strain ATCC BAA-335 / MC58).